The sequence spans 102 residues: Small ribosomal subunit protein uS10 (102 aa).

The protein belongs to the universal ribosomal protein uS10 family. In terms of assembly, part of the 30S ribosomal subunit.

Involved in the binding of tRNA to the ribosomes. The chain is Small ribosomal subunit protein uS10 from Dehalococcoides mccartyi (strain ATCC BAA-2100 / JCM 16839 / KCTC 5957 / BAV1).